The primary structure comprises 98 residues: RING finger protein Z (98 aa).

A compositionally biased stretch (basic and acidic residues) spans 1 to 10; sequence MGNTKTKDRQ. The disordered stretch occupies residues 1-26; sequence MGNTKTKDRQYQSNSSQPTNTSAPVL. The N-myristoyl glycine; by host moiety is linked to residue glycine 2. Residues 11-23 show a composition bias toward polar residues; that stretch reads YQSNSSQPTNTSA. The segment at 41–77 adopts an RING-type; atypical zinc-finger fold; the sequence is CRCCWFADTNLVNCSNHYLCLKCLNTMLRRSNLCDIC. Positions 91 to 94 match the PTAP/PSAP motif motif; it reads PSAP.

It belongs to the arenaviridae Z protein family. Interacts with protein NP; this interaction probably directs the encapsidated genome to budding sites. Interacts (via RING domain) with polymerase L; this interaction inhibits viral transcription and replication, Z partially blocks the product exit tunnel for the releasing nascent RNA product. Interacts with the glycoprotein complex; this interaction plays a role in virion budding. Interacts with host eIF4E; this interaction results in eIF4E reduced affinity for its substrate, the 5'-m7 G cap structure. Interacts (via late-budding domain) with host TSG101; this interaction is essential for budding and release of viral particles. Interacts with host RPLP0; this interaction may serve to load ribosome-like particles inside the virion. Interacts with host PML; this interaction induces PML bodies redistribution in the cytoplasm upon viral infection. Myristoylation is required for the role of RING finger protein Z in assembly and budding.

Its subcellular location is the virion. The protein localises to the host cytoplasm. It is found in the host perinuclear region. The protein resides in the host cell membrane. Its function is as follows. Plays a crucial role in virion assembly and budding. Expressed late in the virus life cycle, it acts as an inhibitor of viral transcription and RNA synthesis by interacting with the viral polymerase L. Presumably recruits the NP encapsidated genome to cellular membranes at budding sites via direct interaction with NP. Plays critical roles in the final steps of viral release by interacting with host TSG101, a member of the vacuolar protein-sorting pathway and using other cellular host proteins involved in vesicle formation pathway. The budding of the virus progeny occurs after association of protein Z with the viral glycoprotein complex SSP-GP1-GP2 at the cell periphery, step that requires myristoylation of protein Z. Also selectively represses protein production by associating with host eIF4E. In cell-based minigenome assay, has an inhibitory effect on the ribonucleoprotein machinery (vRNP), which is responsible for the replication and transcription of the viral genome. This Chapare mammarenavirus (isolate Human/Bolivia/810419/2003) protein is RING finger protein Z.